Consider the following 346-residue polypeptide: UDP-N-acetylenolpyruvoylglucosamine reductase (346 aa).

The FAD-binding PCMH-type domain maps to 18–189 (LRAQARAFIA…VSVVFALKTH (172 aa)). R165 is an active-site residue. S240 (proton donor) is an active-site residue. The active site involves E336.

This sequence belongs to the MurB family. FAD serves as cofactor.

It is found in the cytoplasm. The enzyme catalyses UDP-N-acetyl-alpha-D-muramate + NADP(+) = UDP-N-acetyl-3-O-(1-carboxyvinyl)-alpha-D-glucosamine + NADPH + H(+). It functions in the pathway cell wall biogenesis; peptidoglycan biosynthesis. Functionally, cell wall formation. This Neisseria meningitidis serogroup A / serotype 4A (strain DSM 15465 / Z2491) protein is UDP-N-acetylenolpyruvoylglucosamine reductase.